The chain runs to 529 residues: Glucose-6-phosphate isomerase (529 aa).

E322 acts as the Proton donor in catalysis. Catalysis depends on residues H351 and K455.

The protein belongs to the GPI family.

The protein resides in the cytoplasm. It catalyses the reaction alpha-D-glucose 6-phosphate = beta-D-fructose 6-phosphate. It participates in carbohydrate biosynthesis; gluconeogenesis. It functions in the pathway carbohydrate degradation; glycolysis; D-glyceraldehyde 3-phosphate and glycerone phosphate from D-glucose: step 2/4. Its function is as follows. Catalyzes the reversible isomerization of glucose-6-phosphate to fructose-6-phosphate. In Thermosynechococcus vestitus (strain NIES-2133 / IAM M-273 / BP-1), this protein is Glucose-6-phosphate isomerase.